Reading from the N-terminus, the 210-residue chain is Large ribosomal subunit protein uL3 (210 aa).

The disordered stretch occupies residues 125–151 (RHGQSRGPMSHGSRYHRRPGSMGPVAP).

This sequence belongs to the universal ribosomal protein uL3 family. Part of the 50S ribosomal subunit. Forms a cluster with proteins L14 and L19.

In terms of biological role, one of the primary rRNA binding proteins, it binds directly near the 3'-end of the 23S rRNA, where it nucleates assembly of the 50S subunit. The polypeptide is Large ribosomal subunit protein uL3 (Bacillus cereus (strain Q1)).